The primary structure comprises 124 residues: Large ribosomal subunit protein bL12 (124 aa).

The interval 99 to 124 (KEGMNKEDAEKAKADLEAAGAKVELK) is disordered. A compositionally biased stretch (basic and acidic residues) spans 101–114 (GMNKEDAEKAKADL). The span at 115-124 (EAAGAKVELK) shows a compositional bias: low complexity.

The protein belongs to the bacterial ribosomal protein bL12 family. Homodimer. Part of the ribosomal stalk of the 50S ribosomal subunit. Forms a multimeric L10(L12)X complex, where L10 forms an elongated spine to which 2 to 4 L12 dimers bind in a sequential fashion. Binds GTP-bound translation factors.

Forms part of the ribosomal stalk which helps the ribosome interact with GTP-bound translation factors. Is thus essential for accurate translation. The sequence is that of Large ribosomal subunit protein bL12 from Campylobacter hominis (strain ATCC BAA-381 / DSM 21671 / CCUG 45161 / LMG 19568 / NCTC 13146 / CH001A).